Reading from the N-terminus, the 203-residue chain is Urease accessory protein UreG (203 aa).

A GTP-binding site is contributed by 12 to 19 (GPVGSGKT).

It belongs to the SIMIBI class G3E GTPase family. UreG subfamily. In terms of assembly, homodimer. UreD, UreF and UreG form a complex that acts as a GTP-hydrolysis-dependent molecular chaperone, activating the urease apoprotein by helping to assemble the nickel containing metallocenter of UreC. The UreE protein probably delivers the nickel.

The protein resides in the cytoplasm. Its function is as follows. Facilitates the functional incorporation of the urease nickel metallocenter. This process requires GTP hydrolysis, probably effectuated by UreG. This chain is Urease accessory protein UreG, found in Alteromonas mediterranea (strain DSM 17117 / CIP 110805 / LMG 28347 / Deep ecotype).